The sequence spans 351 residues: Prostaglandin reductase 2 (351 aa).

Substrate is bound at residue Phe99 to Tyr100. NADP(+) contacts are provided by residues Gly165 to Gly168, Lys192, Tyr208, Asn231, Cys253 to Tyr259, Phe287 to Val289, and Asn337. Residue Leu288–Leu290 coordinates substrate.

This sequence belongs to the NADP-dependent oxidoreductase L4BD family. In terms of assembly, monomer.

It localises to the cytoplasm. It catalyses the reaction 13,14-dihydro-15-oxo-prostaglandin E2 + NAD(+) = 15-oxoprostaglandin E2 + NADH + H(+). The catalysed reaction is 13,14-dihydro-15-oxo-prostaglandin E2 + NADP(+) = 15-oxoprostaglandin E2 + NADPH + H(+). The enzyme catalyses 13,14-dihydro-15-oxo-PGF2alpha + NADP(+) = 15-oxoprostaglandin F2alpha + NADPH + H(+). It carries out the reaction 13,14-dihydro-15-oxo-prostaglandin E1 + NADP(+) = 15-oxoprostaglandin E1 + NADPH + H(+). It catalyses the reaction 13,14-dihydro-15-oxo-prostaglandin F1alpha + NADP(+) = 15-oxoprostaglandin F1alpha + NADPH + H(+). Functionally, functions as 15-oxo-prostaglandin 13-reductase and acts on 15-keto-PGE1, 15-keto-PGE2, 15-keto-PGE1-alpha and 15-keto-PGE2-alpha with highest activity towards 15-keto-PGE2. Overexpression represses transcriptional activity of PPARG and inhibits adipocyte differentiation. The chain is Prostaglandin reductase 2 (PTGR2) from Bos taurus (Bovine).